A 185-amino-acid chain; its full sequence is Elongation factor P (185 aa).

The protein belongs to the elongation factor P family.

The protein localises to the cytoplasm. Its pathway is protein biosynthesis; polypeptide chain elongation. In terms of biological role, involved in peptide bond synthesis. Stimulates efficient translation and peptide-bond synthesis on native or reconstituted 70S ribosomes in vitro. Probably functions indirectly by altering the affinity of the ribosome for aminoacyl-tRNA, thus increasing their reactivity as acceptors for peptidyl transferase. This chain is Elongation factor P, found in Clostridium novyi (strain NT).